The following is a 208-amino-acid chain: Ribosomal RNA large subunit methyltransferase E (208 aa).

S-adenosyl-L-methionine-binding residues include Gly63, Trp65, Asp83, Asp99, and Asp124. Catalysis depends on Lys164, which acts as the Proton acceptor.

Belongs to the class I-like SAM-binding methyltransferase superfamily. RNA methyltransferase RlmE family.

Its subcellular location is the cytoplasm. The enzyme catalyses uridine(2552) in 23S rRNA + S-adenosyl-L-methionine = 2'-O-methyluridine(2552) in 23S rRNA + S-adenosyl-L-homocysteine + H(+). Its function is as follows. Specifically methylates the uridine in position 2552 of 23S rRNA at the 2'-O position of the ribose in the fully assembled 50S ribosomal subunit. In Salmonella choleraesuis (strain SC-B67), this protein is Ribosomal RNA large subunit methyltransferase E.